We begin with the raw amino-acid sequence, 678 residues long: Auxin response factor 7 (678 aa).

Residues 128 to 230 (FCKTLTASDT…ELRVGVRRLM (103 aa)) constitute a DNA-binding region (TF-B3). Disordered stretches follow at residues 360 to 386 (AVSNSQPSPQPPARNKRARPPASNSIA) and 502 to 547 (GVGQ…SRQV). Residues 548–641 (RSCTKVIMQG…EAKQLTPKSK (94 aa)) enclose the PB1 domain. The tract at residues 643–678 (PIIGDAIKPNPNKQSPESDMPHSDLDSTAPVTDKDC) is disordered.

It belongs to the ARF family. Homodimers and heterodimers. As to expression, expressed in roots, culms, leaves and young panicles.

The protein localises to the nucleus. Auxin response factors (ARFs) are transcriptional factors that bind specifically to the DNA sequence 5'-TGTCTC-3' found in the auxin-responsive promoter elements (AuxREs). This is Auxin response factor 7 (ARF7) from Oryza sativa subsp. japonica (Rice).